Reading from the N-terminus, the 590-residue chain is Kinetochore protein ndc-80 (590 aa).

2 coiled-coil regions span residues 269–342 (KGNE…KQIH) and 450–525 (ELET…MKLD).

Belongs to the NDC80/HEC1 family. As to quaternary structure, component of the NDC80 complex, which is composed of at least ndc-80 and him-10. The NDC80 complex interacts with knl-1. Interacts with the RZZ complex components rod-1 (via N-terminus) and zwl-1.

It localises to the nucleus. Its subcellular location is the chromosome. The protein localises to the centromere. It is found in the kinetochore. The protein resides in the cytoplasm. It localises to the cytoskeleton. Acts as a component of the essential kinetochore-associated ndc-80 complex, which is required for chromosome segregation in mitosis and meiosis and spindle checkpoint activity. Plays a role in kinetochore assembly and recruits the checkpoint protein mdf-2 and the spindly-like protein spdl-1 to unattached kinetochores. Mediates the formation of end-on kinetochore-microtubule attachments through recruitment of spdl-1. The ndc-80 complex synergistically enhances the affinity of the ska-1 complex for microtubules and may allow the ndc-80 complex to track depolymerizing microtubules. In Caenorhabditis elegans, this protein is Kinetochore protein ndc-80 (ndc-80).